A 203-amino-acid polypeptide reads, in one-letter code: Peptide deformylase (203 aa).

Fe cation-binding residues include Cys-130 and His-173. Glu-174 is an active-site residue. His-177 lines the Fe cation pocket.

This sequence belongs to the polypeptide deformylase family. It depends on Fe(2+) as a cofactor.

The catalysed reaction is N-terminal N-formyl-L-methionyl-[peptide] + H2O = N-terminal L-methionyl-[peptide] + formate. In terms of biological role, removes the formyl group from the N-terminal Met of newly synthesized proteins. Requires at least a dipeptide for an efficient rate of reaction. N-terminal L-methionine is a prerequisite for activity but the enzyme has broad specificity at other positions. This is Peptide deformylase from Streptococcus pneumoniae serotype 4 (strain ATCC BAA-334 / TIGR4).